A 150-amino-acid polypeptide reads, in one-letter code: uncharacterized protein (150 aa).

The N-terminal stretch at 1–28 (MPLDVWIAFSYFIDFFQWLFMLNAEVMR) is a signal peptide.

This is an uncharacterized protein from Archaeoglobus fulgidus (strain ATCC 49558 / DSM 4304 / JCM 9628 / NBRC 100126 / VC-16).